The sequence spans 536 residues: MDKVGKMWNNFKYRCQNLFGHEGGSRSENVDMNSNRCLSVKKKNISLGDSAPQQQSSPLRENVALQLGLSPSKNSSRRNQNCAAEIPQIVEISIEKDNDSCVTPGTRLARRDSYSRHAPWGGKKKHSCSTKTQSSLDTDKKFGRTRSGLQRRERRYGVSSVHDMDSVSSRTVGSRSLRQRLQDTVGLCFPMRTYSKQSKPLFSNKRKIHLSELMLEKCPFPAGSDLAQKWHLIKQHTAPVSPHSTFFDTFDPSLVSTEDEEDRLRERRRLSIEEGVDPPPNAQIHTFEATAQVNPLYKLGPKLAPGMTEVNGDSCAVPQANCDSEEDTTTLCLQSRRQKQRQVSGDSHAHVSRQGAWKVHTQIDYIHCLVPDLLQITGNPCYWGVMDRYEAEALLEGKPEGTFLLRDSAQEDYLFSVSFRRYNRSLHARIEQWNHNFSFDAHDPCVFHSSTVTGLLEHYKDPSSCMFFEPLLTISLNRTFPFSLQYICRAVICRCTTYDGIDGLPLPSMLQDFLKEYHYKQKVRVRWLEREPVKAK.

The tract at residues 1–50 is required for interaction with IL4R; the sequence is MDKVGKMWNNFKYRCQNLFGHEGGSRSENVDMNSNRCLSVKKKNISLGDS. The tract at residues 115–175 is disordered; that stretch reads SRHAPWGGKK…SVSSRTVGSR (61 aa). Residues 158 to 169 show a composition bias toward low complexity; sequence VSSVHDMDSVSS. One can recognise an SH2 domain in the interval 381 to 476; sequence CYWGVMDRYE…FFEPLLTISL (96 aa). An SOCS box domain is found at 471–520; sequence LLTISLNRTFPFSLQYICRAVICRCTTYDGIDGLPLPSMLQDFLKEYHYK.

Interacts with EGFR. Interacts with ELOB and ELOC; mediates EGFR ubiquitination and degradation. Interacts with IL4R; inhibits IL4 signaling. Phosphorylated. Phosphorylation is induced by EGF.

Its pathway is protein modification; protein ubiquitination. Its function is as follows. SOCS family proteins form part of a classical negative feedback system that regulates cytokine signal transduction. May be a substrate-recognition component of a SCF-like ECS (Elongin BC-CUL2/5-SOCS-box protein) E3 ubiquitin-protein ligase complex which mediates the ubiquitination and subsequent proteasomal degradation of target proteins. Inhibits for instance EGF signaling by mediating the degradation of the EGF receptor/EGFR. Involved in the regulation of T-helper cell differentiation by inhibiting of the IL4 signaling pathway which promotes differentiation into the Th2 phenotype. Can also partially inhibit IL6 and LIF signaling. This chain is Suppressor of cytokine signaling 5 (SOCS5), found in Bos taurus (Bovine).